Here is a 427-residue protein sequence, read N- to C-terminus: Glutamate-1-semialdehyde 2,1-aminomutase (427 aa).

At Lys-267 the chain carries N6-(pyridoxal phosphate)lysine.

The protein belongs to the class-III pyridoxal-phosphate-dependent aminotransferase family. HemL subfamily. Homodimer. Pyridoxal 5'-phosphate is required as a cofactor.

It is found in the cytoplasm. The catalysed reaction is (S)-4-amino-5-oxopentanoate = 5-aminolevulinate. The protein operates within porphyrin-containing compound metabolism; protoporphyrin-IX biosynthesis; 5-aminolevulinate from L-glutamyl-tRNA(Glu): step 2/2. This Thermodesulfovibrio yellowstonii (strain ATCC 51303 / DSM 11347 / YP87) protein is Glutamate-1-semialdehyde 2,1-aminomutase.